Here is a 428-residue protein sequence, read N- to C-terminus: Spliceosome RNA helicase DDX39B (428 aa).

Positions Met1–Glu19 are enriched in acidic residues. Residues Met1 to Lys32 are disordered. N-acetylalanine is present on Ala2. N6-acetyllysine; alternate is present on Lys36. A Glycyl lysine isopeptide (Lys-Gly) (interchain with G-Cter in SUMO2); alternate cross-link involves residue Lys36. Residues Ser38 and Ser41 each carry the phosphoserine modification. A Q motif motif is present at residues Ser45–His73. The Helicase ATP-binding domain occupies Ile76–Ile249. Ala89–Thr96 is a binding site for ATP. A Phosphothreonine modification is found at Thr172. Residues Asp196 to Asp199 carry the DECD box motif. Positions Gly261–Ser422 constitute a Helicase C-terminal domain.

This sequence belongs to the DEAD box helicase family. DECD subfamily. In terms of assembly, homodimer, and heterodimer with DDX39A. DDX39B interacts with the THO subcomplex to form the THO-DDX39B complex which multimerizes into a 28-subunit tetrameric assembly. Component of the transcription/export (TREX) complex at least composed of ALYREF/THOC4, DDX39B, SARNP/CIP29, CHTOP and the THO subcomplex; in the complex interacts with THOC2. THOC1-THOC2-THOC3-DDX39B subcomplex is sufficient for the interaction with export factor NXF1-NXT1. TREX seems to have a dynamic structure involving ATP-dependent remodeling. Within the TREX complex bridges ALYREF/THOC4 and the THO subcomplex, and, in a ATP-dependent manner, ALYREF/THOC4 and SARNP/CIP29. Component of the spliceosome. Interacts directly with U2AF2. Interacts with RBM8A, RNPS1 and SRRM1, FYTTD1/UIF, THOC1, MX1 and POLDIP3. Interacts with LUZP4. Interacts with SARNP/CIP29 (via the C-terminal domain); the interaction is direct and facilitates RNA binding of DDX39B.

It is found in the nucleus. The protein resides in the nucleus speckle. Its subcellular location is the cytoplasm. It carries out the reaction ATP + H2O = ADP + phosphate + H(+). Involved in nuclear export of spliced and unspliced mRNA. Component of the TREX complex which is thought to couple mRNA transcription, processing and nuclear export, and specifically associates with spliced mRNA and not with unspliced pre-mRNA. The TREX complex is recruited to spliced mRNAs by a transcription-independent mechanism, binds to mRNA upstream of the exon-junction complex (EJC) and is recruited in a splicing- and cap-dependent manner to a region near the 5' end of the mRNA where it functions in mRNA export to the cytoplasm via the TAP/NXF1 pathway. The THOC1-THOC2-THOC3 core complex alone is sufficient to promote ATPase activity of DDX39B; in the complex THOC2 is the only component that directly interacts with DDX39B. Associates with SARNP/CIP29, which facilitates RNA binding of DDX39B and likely plays a role in mRNA export. May undergo several rounds of ATP hydrolysis during assembly of TREX to drive subsequent loading of components such as ALYREF/THOC4 and CHTOP onto mRNA. Also associates with pre-mRNA independent of ALYREF/THOC4. Involved in the nuclear export of intronless mRNA; the ATP-bound form is proposed to recruit export adapter ALYREF/THOC4 to intronless mRNA; its ATPase activity is cooperatively stimulated by RNA and ALYREF/THOC4 and ATP hydrolysis is thought to trigger the dissociation from RNA to allow the association of ALYREF/THOC4 and the NXF1-NXT1 heterodimer. Involved in transcription elongation and genome stability. Functionally, splice factor that is required for the first ATP-dependent step in spliceosome assembly and for the interaction of U2 snRNP with the branchpoint. Has both RNA-stimulated ATP binding/hydrolysis activity and ATP-dependent RNA unwinding activity. Even with the stimulation of RNA, the ATPase activity is weak. Can only hydrolyze ATP but not other NTPs. The RNA stimulation of ATPase activity does not have a strong preference for the sequence and length of the RNA. However, ssRNA stimulates the ATPase activity much more strongly than dsRNA. Can unwind 5' or 3' overhangs or blunt end RNA duplexes in vitro. The ATPase and helicase activities are not influenced by U2AF2; the effect of ALYREF/THOC4 is reported conflictingly. This is Spliceosome RNA helicase DDX39B (DDX39B) from Canis lupus familiaris (Dog).